A 958-amino-acid polypeptide reads, in one-letter code: MTTPLMGVMPTSLRATLQNCSRGNQQEGLFSPKAMGRMAGQKDSTKPRDEVFHPHAAKDSLLATTLRWPVLSQQLSPPQTVPYVAWSGNIKDPSPYMKGCSLPMWSPCLDTKDVDSSVSSGRMSGSSGGHESCTLSHGPWKERPPLILGPQRQPRKSDPRLEQLRDKIRAQAQWQASCASLGTSAPSSASCLYKTSTMLWRKTPKVTNALPVPAFPGSGVLRTAEHRGKDRASLSLRRELSKVPQHHTSVPRTNFKKVKNASCKREISKSSILRRTAKGRGSDRKAAAVKASPAHTWLCKPMSAHSDQQVSKHTPSLAFQDQSATIHGAMETLQDLRQQIQAGLELTRSPRVDRKLSLSKPKPQNLVGKRDRGLQSTQDMQGSSKTAWTVTEGKNSSLHRAGNLHSQQHRKKALAEHESCPRRTWTGQGQDSSFPRPGSTPEKPRFFSQRPWSALARQTYPQRTWDAQGQDISVQKSGSSLKKPSPFSQRPWSALAGRAYSACEDREVFEPSPWNSLSRPHSALQDPWSNSFVQRSSPSSKGKSAVPPPSKVKPAWPEPSQDLLQSKPAKEQDTPCPRPRGSLGQQHSSESLRDFMRQKAQARRQQALEQKALAAHTLELRNQRLQEVYRKQREAVLGKDIPVVSQRRPGIVTFVPMQSGGMEAPGSLGSPREQTWSKVTSGMVLGDQEAPDSFCLCLNKPWNRIETQDTGRPLEGYKQARLQALETMAEALRQRVDILTTKLDKPTSPDTSGDLASDVLPLCPSTAPATPTLVPPSYLRTLMSKGGRESPRDLVDSQAEPLLLSTCFQDGEMLPWSPSWELPNPNLGTHIESQPQGPVSSTPASVSQVIPHTQSCPAGSSSHGALSKEAIQGLEKKLQREMATLQALGACMKSSLGMPDAPDPTRGSLWQEEMPEVKKEGLVTPWTTRSCGKGEPADRPWAGWSGGQGGLPWASSTA.

The segment covering 116–132 (SSVSSGRMSGSSGGHES) has biased composition (low complexity). Disordered stretches follow at residues 116–160 (SSVS…SDPR), 345–447 (ELTR…PRFF), 470–492 (QDIS…QRPW), and 510–602 (EPSP…KAQA). Composition is skewed to polar residues over residues 374 to 398 (LQST…NSSL) and 470 to 491 (QDIS…SQRP). The span at 536-545 (SSPSSKGKSA) shows a compositional bias: low complexity. Residues 718–743 (KQARLQALETMAEALRQRVDILTTKL) are a coiled coil. The tract at residues 916–958 (EVKKEGLVTPWTTRSCGKGEPADRPWAGWSGGQGGLPWASSTA) is disordered.

The protein is Coiled-coil domain-containing protein 187 of Mus musculus (Mouse).